Consider the following 190-residue polypeptide: DNA-invertase (190 aa).

The Resolvase/invertase-type recombinase catalytic domain maps to 2–135; that stretch reads ATIGYIRVST…AGLAAARAQG (134 aa). Residue Ser-10 is the O-(5'-phospho-DNA)-serine intermediate of the active site. A DNA-binding region (H-T-H motif) is located at residues 162–181; the sequence is RQQLAIIFGIGVSTLYRYFP.

The protein belongs to the site-specific recombinase resolvase family.

In terms of biological role, a DNA fragment of approximately 900 base pairs, adjacent to the fljB (H2) gene, which specifies the synthesis of phase-2 flagellin, can exist in either orientation with respect to fljB. The orientation of the inversion region controls expression of fljB. The hin gene occupies about two-thirds of the inversion region; it is required for the inversion of the fljB controlling region. The sequence is that of DNA-invertase (hin) from Salmonella abortus-equi.